Consider the following 210-residue polypeptide: Large ribosomal subunit protein uL4 (210 aa).

The tract at residues 46 to 85 is disordered; it reads QGTASTLTRSEVRGGGRKPYKQKGTGRARQGSIRTPLRPG. Residues 60 to 71 are compositionally biased toward basic residues; sequence GGRKPYKQKGTG.

This sequence belongs to the universal ribosomal protein uL4 family. In terms of assembly, part of the 50S ribosomal subunit.

One of the primary rRNA binding proteins, this protein initially binds near the 5'-end of the 23S rRNA. It is important during the early stages of 50S assembly. It makes multiple contacts with different domains of the 23S rRNA in the assembled 50S subunit and ribosome. In terms of biological role, forms part of the polypeptide exit tunnel. The sequence is that of Large ribosomal subunit protein uL4 from Prochlorococcus marinus (strain AS9601).